Reading from the N-terminus, the 200-residue chain is Large ribosomal subunit protein uL4 (200 aa).

Residues 44–71 (AQKTRAEVSGGGKKPWRQKGTGRARAGS) are disordered.

It belongs to the universal ribosomal protein uL4 family. In terms of assembly, part of the 50S ribosomal subunit.

In terms of biological role, one of the primary rRNA binding proteins, this protein initially binds near the 5'-end of the 23S rRNA. It is important during the early stages of 50S assembly. It makes multiple contacts with different domains of the 23S rRNA in the assembled 50S subunit and ribosome. Functionally, forms part of the polypeptide exit tunnel. The sequence is that of Large ribosomal subunit protein uL4 from Psychrobacter sp. (strain PRwf-1).